The following is a 409-amino-acid chain: N-acetylglucosamine-6-phosphate deacetylase (409 aa).

Position 143 (glutamate 143) interacts with a divalent metal cation. 154–155 (AH) contributes to the substrate binding site. A divalent metal cation is bound by residues histidine 211 and histidine 232. Substrate contacts are provided by residues 235–236 (NA), arginine 243, and 269–272 (DGIH). Aspartate 294 serves as the catalytic Proton donor/acceptor. 328–330 (LSG) is a binding site for substrate.

The protein belongs to the metallo-dependent hydrolases superfamily. NagA family. It depends on a divalent metal cation as a cofactor.

It carries out the reaction N-acetyl-D-glucosamine 6-phosphate + H2O = D-glucosamine 6-phosphate + acetate. It participates in amino-sugar metabolism; N-acetylneuraminate degradation. Hydrolyzes the N-glycolyl group from N-glycolylglucosamine 6-phosphate (GlcNGc-6-P) in the N-glycolylneuraminic acid (Neu5Gc) degradation pathway. The chain is N-acetylglucosamine-6-phosphate deacetylase (Amdhd2) from Rattus norvegicus (Rat).